The chain runs to 266 residues: Vitamin B12-binding protein (266 aa).

The N-terminal stretch at 1-22 (MAKQMFRALVALLLTLPVWLYA) is a signal peptide. A Fe/B12 periplasmic-binding domain is found at 25 to 266 (RVITLSPANT…QLCNALSQVN (242 aa)). Residues Tyr50 and 242–246 (DWFER) contribute to the cyanocob(III)alamin site. Residues Cys183 and Cys259 are joined by a disulfide bond.

Belongs to the BtuF family. The complex is composed of two ATP-binding proteins (BtuD), two transmembrane proteins (BtuC) and a solute-binding protein (BtuF).

The protein resides in the periplasm. Part of the ABC transporter complex BtuCDF involved in vitamin B12 import. Binds vitamin B12 and delivers it to the periplasmic surface of BtuC. The sequence is that of Vitamin B12-binding protein from Salmonella paratyphi A (strain ATCC 9150 / SARB42).